Reading from the N-terminus, the 798-residue chain is Integrin beta-1 (798 aa).

The signal sequence occupies residues 1–20 (MNLQLIFWIGLISSICCVFG). Over 21–728 (QADENRCLKA…ETPECPTGPD (708 aa)) the chain is Extracellular. The region spanning 26-76 (RCLKANAKSCGECIQAGPNCGWCVNSTFLQEGMPTSARCDDLEALKKKGCH) is the PSI domain. 28 disulfide bridges follow: Cys27/Cys45, Cys35/Cys464, Cys38/Cys64, Cys48/Cys75, Cys207/Cys213, Cys261/Cys301, Cys401/Cys415, Cys435/Cys462, Cys466/Cys486, Cys477/Cys489, Cys491/Cys500, Cys502/Cys533, Cys516/Cys531, Cys525/Cys536, Cys538/Cys553, Cys555/Cys576, Cys560/Cys574, Cys568/Cys579, Cys581/Cys590, Cys592/Cys615, Cys599/Cys613, Cys607/Cys618, Cys620/Cys630, Cys633/Cys636, Cys640/Cys691, Cys646/Cys665, Cys649/Cys661, and Cys699/Cys723. Asn50 is a glycosylation site (N-linked (GlcNAc...) asparagine). Basic and acidic residues predominate over residues 75-91 (CHPDDIENPRGSKDVKK). The tract at residues 75–107 (CHPDDIENPRGSKDVKKNKNVTNRSKGTAEKLQ) is disordered. Residues Asn94 and Asn97 are each glycosylated (N-linked (GlcNAc...) asparagine). Residues 140-378 (DYPIDLYYLM…QLIIDAYNSL (239 aa)) enclose the VWFA domain. Positions 152 and 154 each coordinate Mg(2+). 4 residues coordinate Ca(2+): Ser154, Asp157, Asp158, and Glu189. The tract at residues 207–213 (CTSEQNC) is CX3CL1-binding. N-linked (GlcNAc...) asparagine glycosylation is present at Asn212. Positions 244, 246, 248, and 249 each coordinate Ca(2+). Glu249 is a binding site for Mg(2+). Residue Asn269 is glycosylated (N-linked (GlcNAc...) asparagine). Residues 295–314 (LPNDGQCHLENDVYTMSHYY) form a CX3CL1-binding region. Residue Ala362 participates in Ca(2+) binding. Asn363, Asn406, and Asn417 each carry an N-linked (GlcNAc...) asparagine glycan. An interaction with TMEM182 region spans residues 383 to 465 (ILENSKLPEG…IILQFICECE (83 aa)). I-EGF domains follow at residues 466-501 (CQNE…RHCE), 502-554 (CSTD…KFCE), 555-591 (CDNF…SACD), and 592-631 (CSLD…PTCE). The N-linked (GlcNAc...) asparagine glycan is linked to Asn481. Asn520 carries an N-linked (GlcNAc...) asparagine glycan. Asn584 is a glycosylation site (N-linked (GlcNAc...) asparagine). A glycan (N-linked (GlcNAc...) asparagine) is linked at Asn669. A helical transmembrane segment spans residues 729–751 (IIPIVAGVVAGIVLIGLALLLIW). The Cytoplasmic segment spans residues 752-798 (KLLMIIHDTREFAKFEKEKMNAKWDTGENPIYKSAVTTVVNPKYEGK). A signal for sorting from recycling endosomes; interaction with ACAP1 region spans residues 762–767 (EFAKFE). The residue at position 777 (Thr777) is a Phosphothreonine. At Tyr783 the chain carries Phosphotyrosine. Phosphoserine is present on Ser785. An interaction with ITGB1BP1 region spans residues 785 to 792 (SAVTTVVN). Thr789 is subject to Phosphothreonine. An N6-acetyllysine; alternate modification is found at Lys794. Lys794 is covalently cross-linked (Glycyl lysine isopeptide (Lys-Gly) (interchain with G-Cter in SUMO1); alternate).

This sequence belongs to the integrin beta chain family. Interacts with seprase FAP (seprase); the interaction occurs at the cell surface of invadopodia membrane in a collagen-dependent manner. Heterodimer of an alpha and a beta subunit. Beta-1 associates with either alpha-1, alpha-2, alpha-3, alpha-4, alpha-5, alpha-6, alpha-7, alpha-8, alpha-9, alpha-10, alpha-11 or alpha-V. ITGA6:ITGB1 is found in a complex with CD9; interaction takes place in oocytes and is involved in sperm-egg fusion. Binds LGALS3BP and NMRK2, when associated with alpha-7, but not with alpha-5. Interacts with FLNA, FLNB, FLNC and RANBP9. Interacts with KRT1 in the presence of RACK1 and SRC. Interacts with JAML; integrin alpha-4/beta-1 may regulate leukocyte to endothelial cells adhesion by controlling JAML homodimerization. Interacts with RAB21. Interacts (via the cytoplasmic region) with RAB25 (via the hypervariable C-terminal region). Interacts with MYO10. Interacts with ITGB1BP1 (via C-terminal region); the interaction is a prerequisite for focal adhesion disassembly. Interacts with TLN1; the interaction is prevented by competitive binding of ITGB1BP1. Interacts with ACAP1; required for ITGB1 recycling. Interacts with ASAP3. Interacts with FERMT2; the interaction is inhibited in presence of ITGB1BP1. Interacts with DAB2. Interacts with FGR and HCK. Interacts with alpha-7A and alpha-7B in adult skeletal muscle. Interacts with alpha-7B in cardiomyocytes of adult heart. Interacts with EMP2; the interaction may be direct or indirect and ITGB1 has a heterodimer form. ITGA5:ITGB1 interacts with CCN3. ITGA4:ITGB1 is found in a ternary complex with CX3CR1 and CX3CL1. ITGA5:ITGB1 interacts with FBN1. ITGA5:ITGB1 acts as a receptor for fibronectin FN1 and mediates R-G-D-dependent cell adhesion to FN1. ITGA5:ITGB1 interacts with IL1B. Interacts with MDK. ITGA4:ITGB1 interacts with MDK; this interaction mediates MDK-induced osteoblast cells migration through PXN phosphorylation. ITGA6:ITGB1 interacts with MDK; this interaction mediates MDK-induced neurite-outgrowth. ITGA5:ITGB1 interacts with ACE2. Interacts with TMEM182 and LAMB1. Interacts with tensin TNS3; TNS3 also interacts with PEAK1, thus acting as an adapter molecule to bridge the association of PEAK1 with ITGB1. Interacts with tensin TNS4; the interaction displaces tensin TNS3 from the ITGB1 cytoplasmic tail and promotes ITGB1 stability. Integrin ITGA9:ITGB1 interacts with SPP1/OPN (via N-terminus). Integrin ITGA9:ITGB1 interacts with TNC/TNFN3 (via the 3rd Fibronectin type-III domain). Integrins ITGA4:ITGB1 and ITGA9:ITGB1 interact with SVEP1 (via Sushi domain 21); thereby inhibit Ca(2+) intracellular signaling and as a result repress vasocontraction. ITGA4:ITGB1 and ITGA5:ITGB1 interacts with SELP. Interacts with CD248. ITGA5:ITGB1 interacts with IGFBP1. ITGA4:ITGB1 interacts with BCAM. Interacts with ADGRG6.

It localises to the cell membrane. Its subcellular location is the cell projection. The protein localises to the invadopodium membrane. It is found in the ruffle membrane. The protein resides in the recycling endosome. It localises to the melanosome. Its subcellular location is the lamellipodium. The protein localises to the ruffle. It is found in the cell junction. The protein resides in the focal adhesion. Its function is as follows. Integrins alpha-1/beta-1, alpha-2/beta-1, alpha-10/beta-1 and alpha-11/beta-1 are receptors for collagen. Integrins alpha-1/beta-1 and alpha-2/beta-2 recognize the proline-hydroxylated sequence G-F-P-G-E-R in collagen. Integrins alpha-2/beta-1, alpha-3/beta-1, alpha-4/beta-1, alpha-5/beta-1, alpha-8/beta-1, alpha-10/beta-1, alpha-11/beta-1 and alpha-V/beta-1 are receptors for fibronectin. Alpha-4/beta-1 recognizes one or more domains within the alternatively spliced CS-1 and CS-5 regions of fibronectin. Integrin alpha-5/beta-1 is a receptor for fibrinogen. Integrin alpha-1/beta-1, alpha-2/beta-1, alpha-6/beta-1 and alpha-7/beta-1 are receptors for lamimin. Integrin alpha-6/beta-1 (ITGA6:ITGB1) is present in oocytes and is involved in sperm-egg fusion. Integrin alpha-4/beta-1 is a receptor for VCAM1 and recognizes the sequence Q-I-D-S in VCAM1. Integrin alpha-9/beta-1 is a receptor for VCAM1, cytotactin and osteopontin. It recognizes the sequence A-E-I-D-G-I-E-L in cytotactin. Integrin alpha-3/beta-1 is a receptor for epiligrin, thrombospondin and CSPG4. Integrin alpha-3/beta-1 provides a docking site for FAP (seprase) at invadopodia plasma membranes in a collagen-dependent manner and hence may participate in the adhesion, formation of invadopodia and matrix degradation processes, promoting cell invasion. Alpha-3/beta-1 may mediate with LGALS3 the stimulation by CSPG4 of endothelial cells migration. Integrin alpha-V/beta-1 is a receptor for vitronectin. Beta-1 integrins recognize the sequence R-G-D in a wide array of ligands. When associated with alpha-7/beta-1 integrin, regulates cell adhesion and laminin matrix deposition. Involved in promoting endothelial cell motility and angiogenesis. Involved in osteoblast compaction through the fibronectin fibrillogenesis cell-mediated matrix assembly process and the formation of mineralized bone nodules. May be involved in up-regulation of the activity of kinases such as PKC via binding to KRT1. Together with KRT1 and RACK1, serves as a platform for SRC activation or inactivation. Plays a mechanistic adhesive role during telophase, required for the successful completion of cytokinesis. ITGA4:ITGB1 binds to fractalkine (CX3CL1) and may act as its coreceptor in CX3CR1-dependent fractalkine signaling. ITGA4:ITGB1 and ITGA5:ITGB1 bind to PLA2G2A via a site (site 2) which is distinct from the classical ligand-binding site (site 1) and this induces integrin conformational changes and enhanced ligand binding to site 1. ITGA5:ITGB1 acts as a receptor for fibrillin-1 (FBN1) and mediates R-G-D-dependent cell adhesion to FBN1. ITGA5:ITGB1 is a receptor for IL1B and binding is essential for IL1B signaling. ITGA5:ITGB3 is a receptor for soluble CD40LG and is required for CD40/CD40LG signaling. Plays an important role in myoblast differentiation and fusion during skeletal myogenesis. ITGA9:ITGB1 may play a crucial role in SVEP1/polydom-mediated myoblast cell adhesion. Integrins ITGA9:ITGB1 and ITGA4:ITGB1 repress PRKCA-mediated L-type voltage-gated channel Ca(2+) influx and ROCK-mediated calcium sensitivity in vascular smooth muscle cells via their interaction with SVEP1, thereby inhibit vasocontraction. In Felis catus (Cat), this protein is Integrin beta-1 (ITGB1).